The chain runs to 101 residues: Protein PIP-1 (101 aa).

The first 23 residues, 1–23 (MGKCLLLPLLLVVLSSLLGFPQA), serve as a signal peptide directing secretion. The UPAR/Ly6 domain maps to 24–101 (LECFQCQRVS…CHDSPFCNKF (78 aa)). Disulfide bonds link Cys26/Cys53, Cys29/Cys38, Cys45/Cys71, Cys75/Cys91, and Cys92/Cys98. Asn84 carries N-linked (GlcNAc...) asparagine glycosylation.

It is found in the secreted. This chain is Protein PIP-1, found in Sus scrofa (Pig).